Here is a 225-residue protein sequence, read N- to C-terminus: Ribosomal RNA small subunit methyltransferase G (225 aa).

S-adenosyl-L-methionine is bound by residues glycine 69, 119-120, and arginine 136; that span reads AE.

It belongs to the methyltransferase superfamily. RNA methyltransferase RsmG family.

Its subcellular location is the cytoplasm. Specifically methylates the N7 position of a guanine in 16S rRNA. This is Ribosomal RNA small subunit methyltransferase G from Pseudothermotoga lettingae (strain ATCC BAA-301 / DSM 14385 / NBRC 107922 / TMO) (Thermotoga lettingae).